A 150-amino-acid chain; its full sequence is D-aminoacyl-tRNA deacylase (150 aa).

The Gly-cisPro motif, important for rejection of L-amino acids motif lies at glycine 136 to proline 137.

This sequence belongs to the DTD family. Homodimer.

Its subcellular location is the cytoplasm. It catalyses the reaction glycyl-tRNA(Ala) + H2O = tRNA(Ala) + glycine + H(+). The enzyme catalyses a D-aminoacyl-tRNA + H2O = a tRNA + a D-alpha-amino acid + H(+). In terms of biological role, an aminoacyl-tRNA editing enzyme that deacylates mischarged D-aminoacyl-tRNAs. Also deacylates mischarged glycyl-tRNA(Ala), protecting cells against glycine mischarging by AlaRS. Acts via tRNA-based rather than protein-based catalysis; rejects L-amino acids rather than detecting D-amino acids in the active site. By recycling D-aminoacyl-tRNA to D-amino acids and free tRNA molecules, this enzyme counteracts the toxicity associated with the formation of D-aminoacyl-tRNA entities in vivo and helps enforce protein L-homochirality. The sequence is that of D-aminoacyl-tRNA deacylase from Staphylococcus haemolyticus (strain JCSC1435).